The primary structure comprises 237 residues: Synapse differentiation-inducing gene protein 1-like (237 aa).

Disordered regions lie at residues Met1–Tyr23, Ala84–Ala111, and Glu127–Cys148. Residues Met1–Leu161 lie on the Extracellular side of the membrane. The segment covering Gln129–Cys148 has biased composition (acidic residues). Residues Gly162–Phe182 form a helical membrane-spanning segment. Residues Ser183–Arg204 lie on the Cytoplasmic side of the membrane. A helical membrane pass occupies residues Ala205–Val225. Topologically, residues Ala226–Gly237 are extracellular.

It belongs to the CD225/Dispanin family. In terms of tissue distribution, expression is restricted to the caudate-putamen. Down-regulated in R6/2 transgenic mice, a model for Huntington disease.

The protein localises to the membrane. It is found in the golgi apparatus. Its subcellular location is the cis-Golgi network. The sequence is that of Synapse differentiation-inducing gene protein 1-like (Syndig1l) from Mus musculus (Mouse).